The primary structure comprises 352 residues: 7,8-didemethyl-8-hydroxy-5-deazariboflavin synthase (352 aa).

Residues 35-275 (ITFSKNAFIP…EGISIQVPPN (241 aa)) form the Radical SAM core domain. Residues C49, C53, and C56 each coordinate [4Fe-4S] cluster.

This sequence belongs to the radical SAM superfamily. CofG family. In terms of assembly, consists of two subunits, CofG and CofH. The cofactor is [4Fe-4S] cluster.

It catalyses the reaction 5-amino-5-(4-hydroxybenzyl)-6-(D-ribitylimino)-5,6-dihydrouracil + S-adenosyl-L-methionine = 7,8-didemethyl-8-hydroxy-5-deazariboflavin + 5'-deoxyadenosine + L-methionine + NH4(+) + H(+). It participates in cofactor biosynthesis; coenzyme F0 biosynthesis. Functionally, catalyzes the radical-mediated synthesis of 7,8-didemethyl-8-hydroxy-5-deazariboflavin from 5-amino-5-(4-hydroxybenzyl)-6-(D-ribitylimino)-5,6-dihydrouracil. The polypeptide is 7,8-didemethyl-8-hydroxy-5-deazariboflavin synthase (Methanococcus maripaludis (strain C5 / ATCC BAA-1333)).